The primary structure comprises 515 residues: Pescadillo homolog (515 aa).

Positions 270–327 form a coiled coil; it reads EVLAALNHTLKIIQTQEEDLEVDEFPIDPNSEDAEAIQAQKEEETKLERLKNLFSECK. The region spanning 318–411 is the BRCT domain; that stretch reads RLKNLFSECK…KLLPVEEYFP (94 aa). The disordered stretch occupies residues 477-515; sequence RLYEKIMHSKKKKRSEVRKLESKRKVHDEEKAKKKLKSS. Over residues 484-501 the composition is skewed to basic residues; it reads HSKKKKRSEVRKLESKRK.

The protein belongs to the pescadillo family.

It is found in the nucleus. The protein localises to the nucleolus. Its subcellular location is the nucleoplasm. Its function is as follows. Required for maturation of ribosomal RNAs and formation of the large ribosomal subunit. This chain is Pescadillo homolog, found in Nematostella vectensis (Starlet sea anemone).